A 161-amino-acid chain; its full sequence is Transcriptional repressor NrdR (161 aa).

The segment at 3 to 34 (CPSCQHTDSRVLESRAADSGKSVRRRRECLNC) is a zinc-finger region. Residues 49-139 (ITVVKRSGTR…VYGKFSGISD (91 aa)) enclose the ATP-cone domain.

Belongs to the NrdR family. Zn(2+) serves as cofactor.

Its function is as follows. Negatively regulates transcription of bacterial ribonucleotide reductase nrd genes and operons by binding to NrdR-boxes. This Synechococcus sp. (strain RCC307) protein is Transcriptional repressor NrdR.